Here is a 187-residue protein sequence, read N- to C-terminus: Ion-translocating oxidoreductase complex subunit B (187 aa).

Positions 1–26 are hydrophobic; the sequence is MTHILFAVLVLALLALAFGIILGFAA. A 4Fe-4S domain is found at 32–90; it reads EADPIVDQLDALLPQTQCGQCGYPGCKPYAEALANGDQINKCVPGGDATMRKIADLMGV. 12 residues coordinate [4Fe-4S] cluster: C49, C52, C57, C73, C115, C118, C121, C125, C145, C148, C151, and C155. 4Fe-4S ferredoxin-type domains follow at residues 106-135 and 136-165; these read KVAF…GATK and AMHT…MIPV.

It belongs to the 4Fe4S bacterial-type ferredoxin family. RnfB subfamily. The complex is composed of six subunits: RnfA, RnfB, RnfC, RnfD, RnfE and RnfG. It depends on [4Fe-4S] cluster as a cofactor.

It localises to the cell inner membrane. In terms of biological role, part of a membrane-bound complex that couples electron transfer with translocation of ions across the membrane. This Aeromonas hydrophila subsp. hydrophila (strain ATCC 7966 / DSM 30187 / BCRC 13018 / CCUG 14551 / JCM 1027 / KCTC 2358 / NCIMB 9240 / NCTC 8049) protein is Ion-translocating oxidoreductase complex subunit B.